We begin with the raw amino-acid sequence, 315 residues long: DNA-directed RNA polymerase subunit alpha (315 aa).

Residues 1–228 form an alpha N-terminal domain (alpha-NTD) region; sequence MLEIEKPKIE…EHFKLFMTLT (228 aa). Residues 245–315 form an alpha C-terminal domain (alpha-CTD) region; it reads KEKVLEMTIE…LGLGLKKSDE (71 aa).

It belongs to the RNA polymerase alpha chain family. Homodimer. The RNAP catalytic core consists of 2 alpha, 1 beta, 1 beta' and 1 omega subunit. When a sigma factor is associated with the core the holoenzyme is formed, which can initiate transcription.

It catalyses the reaction RNA(n) + a ribonucleoside 5'-triphosphate = RNA(n+1) + diphosphate. DNA-dependent RNA polymerase catalyzes the transcription of DNA into RNA using the four ribonucleoside triphosphates as substrates. This chain is DNA-directed RNA polymerase subunit alpha, found in Clostridium novyi (strain NT).